The following is a 622-amino-acid chain: Elongation factor 4 (622 aa).

One can recognise a tr-type G domain in the interval 17–198; it reads ELLRNFCIIA…QIVRQIPAPV (182 aa). Residues 29 to 34 and 145 to 148 contribute to the GTP site; these read DHGKST and NKID.

This sequence belongs to the TRAFAC class translation factor GTPase superfamily. Classic translation factor GTPase family. LepA subfamily.

It localises to the cell membrane. The catalysed reaction is GTP + H2O = GDP + phosphate + H(+). Its function is as follows. Required for accurate and efficient protein synthesis under certain stress conditions. May act as a fidelity factor of the translation reaction, by catalyzing a one-codon backward translocation of tRNAs on improperly translocated ribosomes. Back-translocation proceeds from a post-translocation (POST) complex to a pre-translocation (PRE) complex, thus giving elongation factor G a second chance to translocate the tRNAs correctly. Binds to ribosomes in a GTP-dependent manner. The polypeptide is Elongation factor 4 (Kineococcus radiotolerans (strain ATCC BAA-149 / DSM 14245 / SRS30216)).